The chain runs to 180 residues: MELKSTLLDDKAIKRTLIRISHEIIERNKGVEDIVLIGIKRRGYPLAQRIADQIEGIEGRKVDVGYVDITLYRDDLTIVEKDPTVKSIDIETSIKDKKVILVDDVLYTCRTVRAAIDAVMDLDRPEGIQLAVLIDRGHKELPIRADYVGKNIPTSKNEVIKVMLNEIDGEDSVKIYDSIN.

The short motif at 99–111 (VILVDDVLYTCRT) is the PRPP-binding element.

Belongs to the purine/pyrimidine phosphoribosyltransferase family. PyrR subfamily. As to quaternary structure, homodimer and homohexamer; in equilibrium.

The catalysed reaction is UMP + diphosphate = 5-phospho-alpha-D-ribose 1-diphosphate + uracil. Functionally, regulates transcriptional attenuation of the pyrimidine nucleotide (pyr) operon by binding in a uridine-dependent manner to specific sites on pyr mRNA. This disrupts an antiterminator hairpin in the RNA and favors formation of a downstream transcription terminator, leading to a reduced expression of downstream genes. In terms of biological role, also displays a weak uracil phosphoribosyltransferase activity which is not physiologically significant. The polypeptide is Bifunctional protein PyrR (Clostridium botulinum (strain Alaska E43 / Type E3)).